The following is a 413-amino-acid chain: MVYLQKQDKEVFDAIKLELGRQRANIELIASENFVSEQVMEAMGSVLTNKYAEGYPGKRYYGGCEFVDIVEDLARDRAKKLFGAEYANVQPHSGAQANMAVYHTVLEPGDTVLGMNLSHGGHLTHGSPVNFSGVLYNFVEYGVREDTKEIDYEIVREAALKHKPKMIVAGASAYPRKIDFAKFREIADEVGAYLMVDMAHIAGLVAAGLHQNPVPYADFTTTTTHKTLRGPRGGMILAKAEWEQKLNKSIFPGIQGGPLMHVIAAKAVAFGEALQPEFTAYCEQIIRNSKKLAETLQANDVAVLTGGSDNHLLLIDLKPLGLTGKAAEKVLDEVGITVNKNTIPFETESPFVTSGIRVGVAAVTTRGFDEVAIEKVGVLISEVLHNLENEEVLADVKARVANLTNEYPLYPSL.

(6S)-5,6,7,8-tetrahydrofolate is bound by residues Leu-117 and 121–123 (GHL). An N6-(pyridoxal phosphate)lysine modification is found at Lys-226. Residue 349–351 (SPF) coordinates (6S)-5,6,7,8-tetrahydrofolate.

It belongs to the SHMT family. As to quaternary structure, homodimer. Requires pyridoxal 5'-phosphate as cofactor.

The protein localises to the cytoplasm. It carries out the reaction (6R)-5,10-methylene-5,6,7,8-tetrahydrofolate + glycine + H2O = (6S)-5,6,7,8-tetrahydrofolate + L-serine. The protein operates within one-carbon metabolism; tetrahydrofolate interconversion. Its pathway is amino-acid biosynthesis; glycine biosynthesis; glycine from L-serine: step 1/1. In terms of biological role, catalyzes the reversible interconversion of serine and glycine with tetrahydrofolate (THF) serving as the one-carbon carrier. This reaction serves as the major source of one-carbon groups required for the biosynthesis of purines, thymidylate, methionine, and other important biomolecules. Also exhibits THF-independent aldolase activity toward beta-hydroxyamino acids, producing glycine and aldehydes, via a retro-aldol mechanism. This chain is Serine hydroxymethyltransferase, found in Listeria innocua serovar 6a (strain ATCC BAA-680 / CLIP 11262).